Reading from the N-terminus, the 102-residue chain is Integration host factor subunit alpha (102 aa).

Belongs to the bacterial histone-like protein family. As to quaternary structure, heterodimer of an alpha and a beta chain.

This protein is one of the two subunits of integration host factor, a specific DNA-binding protein that functions in genetic recombination as well as in transcriptional and translational control. The protein is Integration host factor subunit alpha of Albidiferax ferrireducens (strain ATCC BAA-621 / DSM 15236 / T118) (Rhodoferax ferrireducens).